Consider the following 312-residue polypeptide: D-alanine--D-alanine ligase (312 aa).

The region spanning 108 to 308 is the ATP-grasp domain; the sequence is KLVWQQTGIP…YSELVVKVLS (201 aa). Residue 138–193 participates in ATP binding; sequence VAKLGVPLFVKPASEGSSVAVEKVKSADALPAALEEAAKHDKIVIVEKSIEGGGEY. Mg(2+)-binding residues include Asp-262, Glu-275, and Asn-277.

This sequence belongs to the D-alanine--D-alanine ligase family. Mg(2+) serves as cofactor. It depends on Mn(2+) as a cofactor.

The protein resides in the cytoplasm. It carries out the reaction 2 D-alanine + ATP = D-alanyl-D-alanine + ADP + phosphate + H(+). It functions in the pathway cell wall biogenesis; peptidoglycan biosynthesis. Functionally, cell wall formation. This Burkholderia mallei (strain NCTC 10247) protein is D-alanine--D-alanine ligase.